The chain runs to 146 residues: Leptin (146 aa).

C96 and C146 are disulfide-bonded.

The protein belongs to the leptin family.

It is found in the secreted. Its function is as follows. Key player in the regulation of energy balance and body weight control. Once released into the circulation, has central and peripheral effects by binding LEPR, found in many tissues, which results in the activation of several major signaling pathways. In the hypothalamus, acts as an appetite-regulating factor that induces a decrease in food intake and an increase in energy consumption by inducing anorexinogenic factors and suppressing orexigenic neuropeptides, also regulates bone mass and secretion of hypothalamo-pituitary-adrenal hormones. In the periphery, increases basal metabolism, influences reproductive function, regulates pancreatic beta-cell function and insulin secretion, is pro-angiogenic for endothelial cell and affects innate and adaptive immunity. In the arcuate nucleus of the hypothalamus, activates by depolarization POMC neurons inducing FOS and SOCS3 expression to release anorexigenic peptides and inhibits by hyperpolarization NPY neurons inducing SOCS3 with a consequent reduction on release of orexigenic peptides. In addition to its known satiety inducing effect, has a modulatory role in nutrient absorption. In the intestine, reduces glucose absorption by enterocytes by activating PKC and leading to a sequential activation of p38, PI3K and ERK signaling pathways which exerts an inhibitory effect on glucose absorption. Acts as a growth factor on certain tissues, through the activation of different signaling pathways increases expression of genes involved in cell cycle regulation such as CCND1, via JAK2-STAT3 pathway, or VEGFA, via MAPK1/3 and PI3K-AKT1 pathways. May also play an apoptotic role via JAK2-STAT3 pathway and up-regulation of BIRC5 expression. Pro-angiogenic, has mitogenic activity on vascular endothelial cells and plays a role in matrix remodeling by regulating the expression of matrix metalloproteinases (MMPs) and tissue inhibitors of metalloproteinases (TIMPs). In innate immunity, modulates the activity and function of neutrophils by increasing chemotaxis and the secretion of oxygen radicals. Increases phagocytosis by macrophages and enhances secretion of pro-inflammatory mediators. Increases cytotoxic ability of NK cells. Plays a pro-inflammatory role, in synergy with IL1B, by inducing NOS2 which promotes the production of IL6, IL8 and Prostaglandin E2, through a signaling pathway that involves JAK2, PI3K, MAP2K1/MEK1 and MAPK14/p38. In adaptive immunity, promotes the switch of memory T-cells towards T helper-1 cell immune responses. Increases CD4(+)CD25(-) T-cell proliferation and reduces autophagy during TCR (T-cell receptor) stimulation, through MTOR signaling pathway activation and BCL2 up-regulation. The chain is Leptin (LEP) from Pongo pygmaeus (Bornean orangutan).